Here is a 276-residue protein sequence, read N- to C-terminus: Rhomboid protease GlpG (276 aa).

6 helical membrane passes run 94–114 (GPVT…MSLI), 142–162 (IFMH…WYLG), 169–189 (LGSG…GYVQ), 192–212 (FSGP…GYVW), 229–249 (LIIF…GMSM), and 250–270 (ANGA…VDTL). The Nucleophile role is filled by serine 201. Residue histidine 254 is part of the active site.

It belongs to the peptidase S54 family.

It localises to the cell inner membrane. The catalysed reaction is Cleaves type-1 transmembrane domains using a catalytic dyad composed of serine and histidine that are contributed by different transmembrane domains.. Rhomboid-type serine protease that catalyzes intramembrane proteolysis. This Salmonella paratyphi A (strain ATCC 9150 / SARB42) protein is Rhomboid protease GlpG.